Consider the following 201-residue polypeptide: Molybdenum cofactor guanylyltransferase (201 aa).

GTP-binding positions include 14–16 (LAG), Lys-31, and Asp-104. Asp-104 is a Mg(2+) binding site.

Belongs to the MobA family. In terms of assembly, monomer. It depends on Mg(2+) as a cofactor.

It is found in the cytoplasm. The catalysed reaction is Mo-molybdopterin + GTP + H(+) = Mo-molybdopterin guanine dinucleotide + diphosphate. Its function is as follows. Transfers a GMP moiety from GTP to Mo-molybdopterin (Mo-MPT) cofactor (Moco or molybdenum cofactor) to form Mo-molybdopterin guanine dinucleotide (Mo-MGD) cofactor. In Helicobacter pylori (strain ATCC 700392 / 26695) (Campylobacter pylori), this protein is Molybdenum cofactor guanylyltransferase.